The chain runs to 384 residues: Cytochrome b (384 aa).

4 helical membrane-spanning segments follow: residues 32 to 52 (FGSL…FLAM), 76 to 98 (WLLR…LHMA), 113 to 133 (LWNM…MGYC), and 179 to 199 (FFSL…LHLL). Positions 82 and 96 each coordinate heme b. Heme b is bound by residues histidine 183 and histidine 197. Histidine 202 provides a ligand contact to a ubiquinone. Transmembrane regions (helical) follow at residues 225–245 (FLFK…FLIS), 289–309 (MMGV…PFVD), 321–341 (LSKI…LIGA), and 348–368 (YIII…ILLP).

The protein belongs to the cytochrome b family. Fungal cytochrome b-c1 complex contains 10 subunits; 3 respiratory subunits, 2 core proteins and 5 low-molecular weight proteins. Cytochrome b-c1 complex is a homodimer. Heme b is required as a cofactor.

It localises to the mitochondrion inner membrane. Functionally, component of the ubiquinol-cytochrome c reductase complex (complex III or cytochrome b-c1 complex) that is part of the mitochondrial respiratory chain. The b-c1 complex mediates electron transfer from ubiquinol to cytochrome c. Contributes to the generation of a proton gradient across the mitochondrial membrane that is then used for ATP synthesis. The sequence is that of Cytochrome b (COB) from Starmerella bacillaris (Yeast).